Here is a 67-residue protein sequence, read N- to C-terminus: uncharacterized protein (67 aa).

This is an uncharacterized protein from Escherichia coli (strain K12).